Reading from the N-terminus, the 489-residue chain is Blue-light-activated histidine kinase (489 aa).

In terms of domain architecture, PAS spans Ala-19–Lys-93. At Cys-69 the chain carries S-4a-FMN cysteine. 2 PAC domains span residues Lys-93–Lys-147 and Tyr-232–Leu-281. The segment at Asn-259–Thr-341 is HWE histidine kinase domain. The residue at position 288 (His-288) is a Phosphohistidine; by autocatalysis.

In terms of processing, FMN binds covalently to cysteine after exposure to blue light and this bond is spontaneously broken in the dark.

It catalyses the reaction ATP + protein L-histidine = ADP + protein N-phospho-L-histidine.. In terms of biological role, photosensitive kinase that is involved in increased bacterial virulence upon exposure to light. Once ejected from an infected animal host, sunlight acts as an environmental signal that increases the virulence of the bacterium, preparing it for infection of the next host. This photoreceptor protein is directly related to the bacterium's survival and replication within host macrophages. The chain is Blue-light-activated histidine kinase from Brucella ovis (strain ATCC 25840 / 63/290 / NCTC 10512).